The chain runs to 220 residues: Iron-sulfur flavoprotein AF_1436 (220 aa).

Cysteine 47, cysteine 50, cysteine 53, and cysteine 59 together coordinate [4Fe-4S] cluster.

The protein belongs to the SsuE family. Isf subfamily. In terms of assembly, homodimer. The cofactor is FMN. [4Fe-4S] cluster is required as a cofactor.

In terms of biological role, redox-active protein probably involved in electron transport. The chain is Iron-sulfur flavoprotein AF_1436 from Archaeoglobus fulgidus (strain ATCC 49558 / DSM 4304 / JCM 9628 / NBRC 100126 / VC-16).